Reading from the N-terminus, the 278-residue chain is Potassium/proton antiporter CemA (278 aa).

4 helical membrane passes run 60–80 (YLVL…SLVF), 163–183 (ILAF…IAVL), 201–221 (FLII…GWEV), and 239–259 (IFLF…YWIF).

Belongs to the CemA family.

It localises to the plastid. The protein localises to the chloroplast inner membrane. The enzyme catalyses K(+)(in) + H(+)(out) = K(+)(out) + H(+)(in). In terms of biological role, contributes to K(+)/H(+) antiport activity by supporting proton efflux to control proton extrusion and homeostasis in chloroplasts in a light-dependent manner to modulate photosynthesis. Prevents excessive induction of non-photochemical quenching (NPQ) under continuous-light conditions. Indirectly promotes efficient inorganic carbon uptake into chloroplasts. This Guillardia theta (Cryptophyte) protein is Potassium/proton antiporter CemA.